The chain runs to 810 residues: MSSAVVASSTTFLVALASSASRGGPRRGRVVGVAAPPALLYDGRAGRLALRAPPPPRPRPRRRDAGVVRRADDGENEAAVERAGEDDEEEEEFSSGAWQPPRSRRGGVGKVLKRRGTVPPVGRYGSGGDAARVRGAAAPAPAPTQDAASSKNGALLSGRDDDTPASRNGSVVTGADKPAAATPPVTITKLPAPDSPVILPSVDKPQPEFVIPDATAPAPPPPGSNPRSSAPLPKPDNSEFAEDKSAKVVESAPKPKATRSSPIPAVEEETWDFKKYFDLNEPDAAEDGDDDDDWADSDASDSEIDQDDDSGPLAGENVMNVIVVAAECSPWCKTGGLGDVAGALPKALARRGHRVMVVVPRYGDYAEAQDVGIRKYYKAAGQDLEVKYFHAFIDGVDFVFIDAPLFRHRQDDIYGGNRQEIMKRMILFCKAAVEVPWHVPCGGVPYGDGNLVFLANDWHTALLPVYLKAYYRDNGMMQYTRSVLVIHNIAYQGRGPVDEFPYMELPEHYLDHFKLYDPVGGEHANIFGAGLKMADRVVTVSPGYLWELKTTEGGWGLHDIIRENDWKMNGIVNGIDYREWNPEVDVHLQSDGYANYTVASLDSGKPRCKAALQRELGLEVRDDVPLIGFIGRLDGQKGVDIIGDAMPWIAGQDVQLVLLGSGRRDLEVMLQRFEAQHNSKVRGWVGFSVKMAHRITAGADVLVMPSRFEPCGLNQLYAMAYGTVPVVHAVGGLRDTVSAFDPFEDTGLGWTFDRAEPHKLIEALGHCLETYRKYKESWRGLQVRGMSQDLSWDHAAELYEEVLVKAKYQW.

The transit peptide at M1–L16 directs the protein to the chloroplast. Disordered stretches follow at residues G43–A265 and E281–L313. Over residues R63 to A83 the composition is skewed to basic and acidic residues. The segment covering G84 to F93 has biased composition (acidic residues). The segment covering R102–G116 has biased composition (basic residues). Low complexity predominate over residues D129 to A148. Acidic residues predominate over residues E281–S310. Residue K333 participates in ADP-alpha-D-glucose binding.

It belongs to the glycosyltransferase 1 family. Bacterial/plant glycogen synthase subfamily. As to expression, expressed most exclusively in endosperm.

The protein resides in the plastid. It is found in the amyloplast. Its subcellular location is the chloroplast. It carries out the reaction [(1-&gt;4)-alpha-D-glucosyl](n) + ADP-alpha-D-glucose = [(1-&gt;4)-alpha-D-glucosyl](n+1) + ADP + H(+). It participates in glycan biosynthesis; starch biosynthesis. Functionally, plays an important role during endosperm starch synthesis. Determines the type of amylopectin structure of starch grain. Synthesizes long B1 amylopectin chains by elongating short A and B1 chains, independently of the other soluble starch synthases. Barely active in japonica subspecies. The protein is Soluble starch synthase 2-3, chloroplastic/amyloplastic (SSII-3) of Oryza sativa subsp. indica (Rice).